The chain runs to 168 residues: MEGWRISLLNEKEKTIFVDADACPVKEEIMLIASQVSVRVIFVASFEHYQLSRSKDENWVYVDPHKEAADLYIANHVRSGDVVVTQDIGLASLLLNRNIAVLSERGRSYTEDTIDFALMSRHMSGKMRRSGIHSKGPKKLNKEDRNRFVTLLKKILSNDEGISNQNIE.

This sequence belongs to the UPF0178 family.

The polypeptide is UPF0178 protein RBAM_023530 (Bacillus velezensis (strain DSM 23117 / BGSC 10A6 / LMG 26770 / FZB42) (Bacillus amyloliquefaciens subsp. plantarum)).